Reading from the N-terminus, the 888-residue chain is Isoleucine--tRNA ligase (888 aa).

Positions 61-71 (PYANGSIHIGH) match the 'HIGH' region motif. Glu-551 provides a ligand contact to L-isoleucyl-5'-AMP. The 'KMSKS' region motif lies at 592 to 596 (KMSKQ). ATP is bound at residue Lys-595. Residues Cys-862, Cys-865, Cys-879, and Cys-882 each coordinate Zn(2+).

This sequence belongs to the class-I aminoacyl-tRNA synthetase family. IleS type 1 subfamily. In terms of assembly, monomer. Zn(2+) serves as cofactor.

Its subcellular location is the cytoplasm. It catalyses the reaction tRNA(Ile) + L-isoleucine + ATP = L-isoleucyl-tRNA(Ile) + AMP + diphosphate. Functionally, catalyzes the attachment of isoleucine to tRNA(Ile). As IleRS can inadvertently accommodate and process structurally similar amino acids such as valine, to avoid such errors it has two additional distinct tRNA(Ile)-dependent editing activities. One activity is designated as 'pretransfer' editing and involves the hydrolysis of activated Val-AMP. The other activity is designated 'posttransfer' editing and involves deacylation of mischarged Val-tRNA(Ile). This Mycoplasmopsis pulmonis (strain UAB CTIP) (Mycoplasma pulmonis) protein is Isoleucine--tRNA ligase.